A 513-amino-acid chain; its full sequence is Probable G-protein coupled receptor Mth-like 9 (513 aa).

The signal sequence occupies residues 1–19; it reads MVSPLIILLIIWLSVGAKS. Over 20 to 207 the chain is Extracellular; that stretch reads VEIASINHPC…NCERFQTGYR (188 aa). 4 disulfides stabilise this stretch: cysteine 29-cysteine 82, cysteine 84-cysteine 89, cysteine 93-cysteine 181, and cysteine 94-cysteine 107. Asparagine 36 carries an N-linked (GlcNAc...) asparagine glycan. 3 N-linked (GlcNAc...) asparagine glycosylation sites follow: asparagine 106, asparagine 125, and asparagine 165. The helical transmembrane segment at 208-228 threads the bilayer; that stretch reads VWIYAICSIIAIIINIFILSL. Topologically, residues 229–242 are cytoplasmic; that stretch reads LGSVRDARKSHYGQ. The chain crosses the membrane as a helical span at residues 243-263; it reads LIIYYLLSMIVGYSLLVYLAL. The Extracellular portion of the chain corresponds to 264 to 276; the sequence is KNPMKLSHVACRN. A helical transmembrane segment spans residues 277–297; it reads IGFLAYFCIMLSFVFLAICSL. Residues 298–314 lie on the Cytoplasmic side of the membrane; it reads DFLLKFKQKAVRSSVRR. The helical transmembrane segment at 315–335 threads the bilayer; the sequence is LSLALAVLAVIGLRFLVSLAQ. Over 336–360 the chain is Extracellular; sequence DSKLPKHFKPGMGEDYCWFDVRTWG. A helical transmembrane segment spans residues 361 to 381; sequence ILIYYYGPIALLLIFSIVCCL. At 382 to 403 the chain is on the cytoplasmic side; sequence KAYFSIYELPPDTQYILGTQLK. A helical transmembrane segment spans residues 404-424; it reads IVKTHFYAFSAYIVGVFAVWI. Over 425–438 the chain is Extracellular; that stretch reads REIVVYIMARVREH. Residues 439–459 traverse the membrane as a helical segment; the sequence is FFIIDFWSGICILGLAIAGFI. Residues 460-513 are Cytoplasmic-facing; sequence LLLGKNLHVKSWWAINVESSQTDLSIINARVYKFDEKGDLKSSDSPYKPTVTSL.

It belongs to the G-protein coupled receptor 2 family. Mth subfamily.

The protein resides in the cell membrane. This chain is Probable G-protein coupled receptor Mth-like 9 (mthl9), found in Drosophila melanogaster (Fruit fly).